Reading from the N-terminus, the 157-residue chain is Endoribonuclease YbeY (157 aa).

Residues His123, His127, and His133 each coordinate Zn(2+).

This sequence belongs to the endoribonuclease YbeY family. It depends on Zn(2+) as a cofactor.

The protein resides in the cytoplasm. In terms of biological role, single strand-specific metallo-endoribonuclease involved in late-stage 70S ribosome quality control and in maturation of the 3' terminus of the 16S rRNA. The sequence is that of Endoribonuclease YbeY from Desulfitobacterium hafniense (strain Y51).